A 377-amino-acid chain; its full sequence is Queuine tRNA-ribosyltransferase (377 aa).

The active-site Proton acceptor is the Asp89. Residues 89-93, Asp143, Gln188, and Gly215 contribute to the substrate site; that span reads DSGGF. An RNA binding region spans residues 246-252; that stretch reads GVGKPED. Residue Asp265 is the Nucleophile of the active site. An RNA binding; important for wobble base 34 recognition region spans residues 270–274; that stretch reads TRNAR. Zn(2+) contacts are provided by Cys303, Cys305, Cys308, and His334.

It belongs to the queuine tRNA-ribosyltransferase family. Homodimer. Within each dimer, one monomer is responsible for RNA recognition and catalysis, while the other monomer binds to the replacement base PreQ1. It depends on Zn(2+) as a cofactor.

It catalyses the reaction 7-aminomethyl-7-carbaguanine + guanosine(34) in tRNA = 7-aminomethyl-7-carbaguanosine(34) in tRNA + guanine. Its pathway is tRNA modification; tRNA-queuosine biosynthesis. In terms of biological role, catalyzes the base-exchange of a guanine (G) residue with the queuine precursor 7-aminomethyl-7-deazaguanine (PreQ1) at position 34 (anticodon wobble position) in tRNAs with GU(N) anticodons (tRNA-Asp, -Asn, -His and -Tyr). Catalysis occurs through a double-displacement mechanism. The nucleophile active site attacks the C1' of nucleotide 34 to detach the guanine base from the RNA, forming a covalent enzyme-RNA intermediate. The proton acceptor active site deprotonates the incoming PreQ1, allowing a nucleophilic attack on the C1' of the ribose to form the product. After dissociation, two additional enzymatic reactions on the tRNA convert PreQ1 to queuine (Q), resulting in the hypermodified nucleoside queuosine (7-(((4,5-cis-dihydroxy-2-cyclopenten-1-yl)amino)methyl)-7-deazaguanosine). The protein is Queuine tRNA-ribosyltransferase of Acinetobacter baumannii (strain SDF).